Here is a 146-residue protein sequence, read N- to C-terminus: Hemoglobin subunit beta (146 aa).

V1 bears the N-acetylvaline mark. The 145-residue stretch at 2 to 146 (HLTADEKTAV…VANALAHKYH (145 aa)) folds into the Globin domain. T12 is modified (phosphothreonine). Residue S44 is modified to Phosphoserine. An N6-acetyllysine modification is found at K59. Residue H63 coordinates heme b. At K82 the chain carries N6-acetyllysine. H92 contributes to the heme b binding site. The residue at position 93 (C93) is an S-nitrosocysteine. An N6-acetyllysine modification is found at K144.

It belongs to the globin family. Heterotetramer of two alpha chains and two beta chains. As to expression, red blood cells.

Its function is as follows. Involved in oxygen transport from the lung to the various peripheral tissues. The polypeptide is Hemoglobin subunit beta (HBB) (Procyon lotor (Raccoon)).